We begin with the raw amino-acid sequence, 328 residues long: GMP reductase (328 aa).

Residue C176 is the Thioimidate intermediate of the active site. 205–228 (IIADGGIRTHGDIAKSIRFGASMI) provides a ligand contact to NADP(+).

It belongs to the IMPDH/GMPR family. GuaC type 2 subfamily.

The enzyme catalyses IMP + NH4(+) + NADP(+) = GMP + NADPH + 2 H(+). Functionally, catalyzes the irreversible NADPH-dependent deamination of GMP to IMP. It functions in the conversion of nucleobase, nucleoside and nucleotide derivatives of G to A nucleotides, and in maintaining the intracellular balance of A and G nucleotides. The protein is GMP reductase of Streptococcus pneumoniae serotype 4 (strain ATCC BAA-334 / TIGR4).